Consider the following 690-residue polypeptide: Protein O-mannosyl-transferase F38B6.6 (690 aa).

The interval 1–24 (MKKHLHHKVSGSCDPGDRSPKEKG) is disordered. The Cytoplasmic portion of the chain corresponds to 1 to 32 (MKKHLHHKVSGSCDPGDRSPKEKGRSQGIRNL). Positions 15 to 24 (PGDRSPKEKG) are enriched in basic and acidic residues. The chain crosses the membrane as a helical span at residues 33-53 (LILISLSIIPYLSCLGGDFVF). Residues 54–110 (DDAESIVNNPIVNGKDPLLQIFSRDFWGRSISSSNSHKSYRPVTTFTFWLNYKLHET) are Extracellular-facing. The helical transmembrane segment at 111–131 (STLGYHVVNIICHTVATLVFY) threads the bilayer. At 132–138 (KLGKQLE) the chain is on the cytoplasmic side. A helical membrane pass occupies residues 139 to 159 (HIFDFFNIAFSASILFAVHPV). Topologically, residues 160 to 166 (HTEAVAN) are extracellular. Residue N166 is glycosylated (N-linked (GlcNAc...) asparagine). Residues 167–187 (ITGRAELLMTIFSLAALILHV) traverse the membrane as a helical segment. The Cytoplasmic portion of the chain corresponds to 188 to 234 (KNREINCKFVLLVILSTLSKEQGLMTIPIAICIDFLAHRSCRSNFVR). A helical membrane pass occupies residues 235 to 255 (MICLLVAIGFLRMMVNGFEAA). The Extracellular segment spans residues 256–273 (KFTKLDNPTAFLNSKFYR). A helical membrane pass occupies residues 274-294 (MINYTYIWLYHAYLLVIPVNL). At 295–307 (CFDYSMGCISSIT) the chain is on the cytoplasmic side. A helical transmembrane segment spans residues 308–328 (TMWDLRALSPVLIFTIVIIGV). The Extracellular segment spans residues 329-341 (KFQNECRAFTLSS). Residues 342-362 (LMGIISFLPASNIFFTVGFSI) form a helical membrane-spanning segment. The Cytoplasmic portion of the chain corresponds to 363–365 (AER). A helical transmembrane segment spans residues 366-386 (VLYLPSAGFCLLCAIIFKKLS). Residues 387-690 (VHFKNADVLS…EHNCYNSTLP (304 aa)) are Extracellular-facing. TPR repeat units follow at residues 398–431 (TLIL…CPTN), 432–465 (AKIH…DPSY), 466–499 (EQAL…RPSF), 500–533 (AVAW…RPNS), and 534–567 (AHCL…DPSH). N559, N600, and N617 each carry an N-linked (GlcNAc...) asparagine glycan. TPR repeat units lie at residues 602 to 635 (SRVH…NPTS) and 636 to 669 (VLFH…DSKN). The N-linked (GlcNAc...) asparagine glycan is linked to N686.

It belongs to the TMTC family.

Its subcellular location is the membrane. The protein localises to the endoplasmic reticulum. It catalyses the reaction a di-trans,poly-cis-dolichyl beta-D-mannosyl phosphate + L-seryl-[protein] = 3-O-(alpha-D-mannosyl)-L-seryl-[protein] + a di-trans,poly-cis-dolichyl phosphate + H(+). The enzyme catalyses a di-trans,poly-cis-dolichyl beta-D-mannosyl phosphate + L-threonyl-[protein] = 3-O-(alpha-D-mannosyl)-L-threonyl-[protein] + a di-trans,poly-cis-dolichyl phosphate + H(+). The protein operates within protein modification; protein glycosylation. In terms of biological role, transfers mannosyl residues to the hydroxyl group of serine or threonine residues. The polypeptide is Protein O-mannosyl-transferase F38B6.6 (Caenorhabditis elegans).